A 102-amino-acid chain; its full sequence is Small ribosomal subunit protein uS10 (102 aa).

This sequence belongs to the universal ribosomal protein uS10 family. In terms of assembly, part of the 30S ribosomal subunit.

In terms of biological role, involved in the binding of tRNA to the ribosomes. This Streptococcus sanguinis (strain SK36) protein is Small ribosomal subunit protein uS10.